The sequence spans 733 residues: Phosphoribosylformylglycinamidine synthase subunit PurL (733 aa).

Residue H41 is part of the active site. Residues Y44 and K83 each coordinate ATP. E85 provides a ligand contact to Mg(2+). Substrate contacts are provided by residues 86-89 (SHNH) and R108. H87 serves as the catalytic Proton acceptor. D109 provides a ligand contact to Mg(2+). Positions 212-232 (GASFASQELSEESEEKRPSVQ) are disordered. Q232 contacts substrate. D260 is a binding site for Mg(2+). 304-306 (ESQ) contacts substrate. D488 and G525 together coordinate ATP. Residue N526 participates in Mg(2+) binding. Position 528 (S528) interacts with substrate.

Belongs to the FGAMS family. As to quaternary structure, monomer. Part of the FGAM synthase complex composed of 1 PurL, 1 PurQ and 2 PurS subunits.

It is found in the cytoplasm. It catalyses the reaction N(2)-formyl-N(1)-(5-phospho-beta-D-ribosyl)glycinamide + L-glutamine + ATP + H2O = 2-formamido-N(1)-(5-O-phospho-beta-D-ribosyl)acetamidine + L-glutamate + ADP + phosphate + H(+). It functions in the pathway purine metabolism; IMP biosynthesis via de novo pathway; 5-amino-1-(5-phospho-D-ribosyl)imidazole from N(2)-formyl-N(1)-(5-phospho-D-ribosyl)glycinamide: step 1/2. Part of the phosphoribosylformylglycinamidine synthase complex involved in the purines biosynthetic pathway. Catalyzes the ATP-dependent conversion of formylglycinamide ribonucleotide (FGAR) and glutamine to yield formylglycinamidine ribonucleotide (FGAM) and glutamate. The FGAM synthase complex is composed of three subunits. PurQ produces an ammonia molecule by converting glutamine to glutamate. PurL transfers the ammonia molecule to FGAR to form FGAM in an ATP-dependent manner. PurS interacts with PurQ and PurL and is thought to assist in the transfer of the ammonia molecule from PurQ to PurL. This chain is Phosphoribosylformylglycinamidine synthase subunit PurL, found in Thermoanaerobacter pseudethanolicus (strain ATCC 33223 / 39E) (Clostridium thermohydrosulfuricum).